We begin with the raw amino-acid sequence, 120 residues long: Cytochrome c oxidase subunit 5 (120 aa).

Ser-2 is modified (blocked amino end (Ser)). 4 residues coordinate Zn(2+): Cys-76, His-84, Cys-99, and Cys-102.

This sequence belongs to the cytochrome c oxidase subunit 5B family. In terms of assembly, component of the cytochrome c oxidase (complex IV, CIV), a multisubunit enzyme composed of a catalytic core of 3 subunits and several supernumerary subunits. The complex exists as a monomer or a dimer and forms supercomplexes (SCs) in the inner mitochondrial membrane with ubiquinol-cytochrome c oxidoreductase (cytochrome b-c1 complex, complex III, CIII). Slime mold cytochrome c oxidase consists of at least seven different polypeptides species, subunits I, II, III, IV, V, VI, and VIIe/s in order of MW.

It localises to the mitochondrion inner membrane. The protein operates within energy metabolism; oxidative phosphorylation. In terms of biological role, component of the cytochrome c oxidase, the last enzyme in the mitochondrial electron transport chain which drives oxidative phosphorylation. The respiratory chain contains 3 multisubunit complexes succinate dehydrogenase (complex II, CII), ubiquinol-cytochrome c oxidoreductase (cytochrome b-c1 complex, complex III, CIII) and cytochrome c oxidase (complex IV, CIV), that cooperate to transfer electrons derived from NADH and succinate to molecular oxygen, creating an electrochemical gradient over the inner membrane that drives transmembrane transport and the ATP synthase. Cytochrome c oxidase is the component of the respiratory chain that catalyzes the reduction of oxygen to water. Electrons originating from reduced cytochrome c in the intermembrane space (IMS) are transferred via the dinuclear copper A center (CU(A)) of subunit 2 and heme A of subunit 1 to the active site in subunit 1, a binuclear center (BNC) formed by heme A3 and copper B (CU(B)). The BNC reduces molecular oxygen to 2 water molecules using 4 electrons from cytochrome c in the IMS and 4 protons from the mitochondrial matrix. The protein is Cytochrome c oxidase subunit 5 (cxeA) of Dictyostelium discoideum (Social amoeba).